Here is a 152-residue protein sequence, read N- to C-terminus: Deoxyuridine 5'-triphosphate nucleotidohydrolase (152 aa).

Residues 72-74, Asn85, 89-91, and Lys99 each bind substrate; these read RSG and TID.

The protein belongs to the dUTPase family. Mg(2+) is required as a cofactor.

The catalysed reaction is dUTP + H2O = dUMP + diphosphate + H(+). It participates in pyrimidine metabolism; dUMP biosynthesis; dUMP from dCTP (dUTP route): step 2/2. Its function is as follows. This enzyme is involved in nucleotide metabolism: it produces dUMP, the immediate precursor of thymidine nucleotides and it decreases the intracellular concentration of dUTP so that uracil cannot be incorporated into DNA. The polypeptide is Deoxyuridine 5'-triphosphate nucleotidohydrolase (Bradyrhizobium diazoefficiens (strain JCM 10833 / BCRC 13528 / IAM 13628 / NBRC 14792 / USDA 110)).